A 479-amino-acid polypeptide reads, in one-letter code: Bifunctional AAC/APH (479 aa).

Residues 8–180 (ICIRTLIDDD…DCYLMEYRYD (173 aa)) enclose the N-acetyltransferase domain. Residues 110 to 153 (KGIGTRYIKLIFEFLKKERNANAVILDPHKNNPRAIRAYQKSGF) form an acetyl-CoA binding site region. D374 serves as the catalytic Proton acceptor; for phosphotransferase activity. D393 provides a ligand contact to a gentamycin.

It in the C-terminal section; belongs to the aminoglycoside phosphotransferase family.

The protein localises to the cytoplasm. It carries out the reaction a gentamycin + GTP = a gentamycin 2''-phosphate + GDP + H(+). Its function is as follows. Involved in resistance to gentamicin, tobramycin, and kanamycin. Tobramycin and kanamycin resistance is due to the ACC activity, specified by N-terminal region. The C-terminal region is a kinase that phosphorylates several 4,6-disubstituted aminoglycosides. In Enterococcus faecalis (strain ATCC 700802 / V583), this protein is Bifunctional AAC/APH (aacA-aphD).